The sequence spans 252 residues: Protein BTG3 (252 aa).

The disordered stretch occupies residues 138 to 163 (VTSDYHSGSSSSDEDTSKEVDVKPSS).

It belongs to the BTG family. In terms of tissue distribution, ubiquitous.

In terms of biological role, overexpression impairs serum-induced cell cycle progression from the G0/G1 to S phase. This Mus musculus (Mouse) protein is Protein BTG3 (Btg3).